The sequence spans 119 residues: Large ribosomal subunit protein uL18 (119 aa).

Residues 1-22 form a disordered region; it reads MGHVEKVARRHKIKTRSKARGQ. The span at 8–19 shows a compositional bias: basic residues; sequence ARRHKIKTRSKA.

It belongs to the universal ribosomal protein uL18 family. Part of the 50S ribosomal subunit; part of the 5S rRNA/L5/L18/L25 subcomplex. Contacts the 5S and 23S rRNAs.

This is one of the proteins that bind and probably mediate the attachment of the 5S RNA into the large ribosomal subunit, where it forms part of the central protuberance. The sequence is that of Large ribosomal subunit protein uL18 from Chlorobium phaeobacteroides (strain BS1).